A 408-amino-acid chain; its full sequence is Phosphoglycerate kinase (408 aa).

Substrate contacts are provided by residues 24–26 (DLN), Arg-40, 63–66 (HLGR), Arg-122, and Arg-166. ATP contacts are provided by residues Lys-216, Gly-304, Glu-335, and 364–367 (GGDS).

The protein belongs to the phosphoglycerate kinase family. Monomer.

The protein resides in the cytoplasm. The catalysed reaction is (2R)-3-phosphoglycerate + ATP = (2R)-3-phospho-glyceroyl phosphate + ADP. It functions in the pathway carbohydrate degradation; glycolysis; pyruvate from D-glyceraldehyde 3-phosphate: step 2/5. In Mycolicibacterium smegmatis (strain ATCC 700084 / mc(2)155) (Mycobacterium smegmatis), this protein is Phosphoglycerate kinase.